A 545-amino-acid chain; its full sequence is E3 ubiquitin-protein ligase ipaH9.8 (545 aa).

The segment at 1-242 (MLPINNNFSL…YHGPRIYFSM (242 aa)) is interaction with target proteins. LRR repeat units follow at residues 57 to 77 (NSDELRLDRLNLSSLPDNLPA), 78 to 99 (QITLLNVSYNQLTNLPELPVTL), 100 to 117 (KKLYSASNKLSELPVLPP), 118 to 139 (ALESLQVQHNELENLPALPDSL), 140 to 157 (LTMNISYNEIVSLPSLPL), 158 to 179 (ALKNLRATRNFLTELPAFSEGN), 182 to 203 (VVREYFFDRNQISHIPESILNL), and 205 to 228 (NECSIHISDNPLSSHALQALQRLT). The segment at 243-250 (SDGQQNTL) is linker. The interval 251-545 (HRPLADAVTA…SENGSQLHHS (295 aa)) is E3 ubiquitin-protein ligase catalytic domain. In terms of domain architecture, NEL spans 253-545 (PLADAVTAWF…SENGSQLHHS (293 aa)). The active-site Glycyl thioester intermediate is the Cys-337.

The protein belongs to the LRR-containing bacterial E3 ligase family. In terms of assembly, also interacts with human and mouse U2AF1 (U2AF35). Ubiquitinated in the presence of host E1 ubiquitin-activating enzyme, E2 ubiquitin-conjugating enzyme and ubiquitin.

The protein localises to the secreted. It is found in the host cytoplasm. The protein resides in the host nucleus. It catalyses the reaction S-ubiquitinyl-[E2 ubiquitin-conjugating enzyme]-L-cysteine + [acceptor protein]-L-lysine = [E2 ubiquitin-conjugating enzyme]-L-cysteine + N(6)-ubiquitinyl-[acceptor protein]-L-lysine.. With respect to regulation, exists in an autoinhibited state in the absence of substrate protein, due to interactions of the leucine-rich repeats with NEL domain. Is activated upon binding to a substrate protein. Effector E3 ubiquitin ligase that interferes with host's ubiquitination pathway and modulates the acute inflammatory responses, thus facilitating bacterial colonization within the host cell. Interacts with IKBKG (NEMO) and TNIP1 (ABIN-1), a ubiquitin-binding adapter protein, which results in TNIP1-dependent 'Lys-27'-linked polyubiquitination of IKBKG. Consequently, polyubiquitinated IKBKG undergoes proteasome-dependent degradation, which perturbs NF-kappa-B activation during bacterial infection. Mediates polyubiquitination of host U2AF1, leading to its proteasomal degradation. Catalyzes 'Lys-48'-linked polyubiquitination and subsequent degradation of a subset of host guanylate-binding proteins (GBP1, GBP2, GBP4 and GBP6), thereby suppressing host cell defense. In contrast, host GBP3 and GBP7 are not ubiquitinated by IpaH9.8. Uses UBE2D2 (UBCH5B) as an E2 ubiquitin-conjugating enzyme. The polypeptide is E3 ubiquitin-protein ligase ipaH9.8 (ipaH9.8) (Shigella boydii serotype 4 (strain Sb227)).